Reading from the N-terminus, the 555-residue chain is MKSEDVKLGIERAPHRSLLRALGLNTESFQKPFIGIVNSFTEVVPGHIHLRQISEAVKEGINAAGGVGFEFNTIAVCDGIAMNHAGMKYSLPSREIIANTVEIMAMAHAFDGLVFIPNCDKVVPGMLMAACRLNIPSIFVSGGPMLAGRLRKNDQVSCVDLNSVFEAVGQVAKGQMTEEELLELEKVACPGCGSCAGMFTANTMNCLTEALGMALPGNGTIPAVDSRRTQLAKSAGQQIMQLIKDNICPKDIITPDAIHNAFSLDVALGGSTNSVLHVMAVAHEAGADFSLEQINRISDCTPNLCKLRPSGPYHIENLDQSGGIGSVLKELKPWLKNDARTVSGKTIGQLADAAPKADNKVIRFASNPYSPKGGLAVLFGNLAPNGSVVKRSAVAPEMMVHRGPARIFDSEELATKAIMGGKIKPGDVLVIRYEGPKGGPGMREMLTPTSLLAGMGLDKEVALITDGRFSGATRGAAMGHVSPEAAACGPIAALQDGDMINIDIHNYKLSVELSDEEIQKRLANVPVFEPKIKSGYLKFYTENVTSASTGAVFKD.

D78 contributes to the Mg(2+) binding site. Residue C119 coordinates [2Fe-2S] cluster. The Mg(2+) site is built by D120 and K121. K121 carries the post-translational modification N6-carboxylysine. C195 contributes to the [2Fe-2S] cluster binding site. A Mg(2+)-binding site is contributed by E444. Residue S470 is the Proton acceptor of the active site.

The protein belongs to the IlvD/Edd family. As to quaternary structure, homodimer. The cofactor is [2Fe-2S] cluster. Mg(2+) serves as cofactor.

The catalysed reaction is (2R)-2,3-dihydroxy-3-methylbutanoate = 3-methyl-2-oxobutanoate + H2O. It carries out the reaction (2R,3R)-2,3-dihydroxy-3-methylpentanoate = (S)-3-methyl-2-oxopentanoate + H2O. Its pathway is amino-acid biosynthesis; L-isoleucine biosynthesis; L-isoleucine from 2-oxobutanoate: step 3/4. The protein operates within amino-acid biosynthesis; L-valine biosynthesis; L-valine from pyruvate: step 3/4. Functionally, functions in the biosynthesis of branched-chain amino acids. Catalyzes the dehydration of (2R,3R)-2,3-dihydroxy-3-methylpentanoate (2,3-dihydroxy-3-methylvalerate) into 2-oxo-3-methylpentanoate (2-oxo-3-methylvalerate) and of (2R)-2,3-dihydroxy-3-methylbutanoate (2,3-dihydroxyisovalerate) into 2-oxo-3-methylbutanoate (2-oxoisovalerate), the penultimate precursor to L-isoleucine and L-valine, respectively. The sequence is that of Dihydroxy-acid dehydratase from Dehalococcoides mccartyi (strain CBDB1).